The sequence spans 577 residues: Peroxynitrite isomerase THAP4 (577 aa).

A THAP-type zinc finger spans residues M1–F85. The segment at I84–F221 is disordered. The span at A157–A170 shows a compositional bias: low complexity. Residue S163 is modified to Phosphoserine. Positions L235–Y238 match the HCFC1-binding motif (HBM) motif. The residue at position 239 (S239) is a Phosphoserine. Positions F240–S324 are disordered. Positions E247–E266 are enriched in basic and acidic residues. A compositionally biased stretch (low complexity) spans T290–P300. Residues P415–P577 are nitrobindin. Positions 444 and 567 each coordinate heme b.

This sequence in the C-terminal section; belongs to the nitrobindin family. As to quaternary structure, homodimer. The cofactor is heme b.

The protein localises to the cytoplasm. It localises to the nucleus. The catalysed reaction is peroxynitrite = nitrate. It participates in nitrogen metabolism. Heme-binding protein able to scavenge peroxynitrite and to protect free L-tyrosine against peroxynitrite-mediated nitration, by acting as a peroxynitrite isomerase that converts peroxynitrite to nitrate. Therefore, this protein likely plays a role in peroxynitrite sensing and in the detoxification of reactive nitrogen and oxygen species (RNS and ROS, respectively). Is able to bind nitric oxide (NO) in vitro, but may act as a sensor of peroxynitrite levels in vivo, possibly modulating the transcriptional activity residing in the N-terminal region. This Homo sapiens (Human) protein is Peroxynitrite isomerase THAP4.